Here is a 182-residue protein sequence, read N- to C-terminus: Isopentenyl-diphosphate Delta-isomerase (182 aa).

Residues His25 and His32 each contribute to the Mn(2+) site. Residues 30–164 (LLHLAFSSWL…PWAFSPWMVM (135 aa)) enclose the Nudix hydrolase domain. The active site involves Cys67. A Mn(2+)-binding site is contributed by His69. A Mg(2+)-binding site is contributed by Glu87. Residues Glu114 and Glu116 each contribute to the Mn(2+) site. The active site involves Glu116.

This sequence belongs to the IPP isomerase type 1 family. As to quaternary structure, homodimer. Mg(2+) is required as a cofactor. The cofactor is Mn(2+).

It localises to the cytoplasm. It catalyses the reaction isopentenyl diphosphate = dimethylallyl diphosphate. Its pathway is isoprenoid biosynthesis; dimethylallyl diphosphate biosynthesis; dimethylallyl diphosphate from isopentenyl diphosphate: step 1/1. In terms of biological role, catalyzes the 1,3-allylic rearrangement of the homoallylic substrate isopentenyl (IPP) to its highly electrophilic allylic isomer, dimethylallyl diphosphate (DMAPP). The chain is Isopentenyl-diphosphate Delta-isomerase from Escherichia coli (strain SMS-3-5 / SECEC).